We begin with the raw amino-acid sequence, 89 residues long: Small ribosomal subunit protein uS15 (89 aa).

Belongs to the universal ribosomal protein uS15 family. In terms of assembly, part of the 30S ribosomal subunit. Forms a bridge to the 50S subunit in the 70S ribosome, contacting the 23S rRNA.

Functionally, one of the primary rRNA binding proteins, it binds directly to 16S rRNA where it helps nucleate assembly of the platform of the 30S subunit by binding and bridging several RNA helices of the 16S rRNA. Forms an intersubunit bridge (bridge B4) with the 23S rRNA of the 50S subunit in the ribosome. The chain is Small ribosomal subunit protein uS15 from Methylorubrum extorquens (strain CM4 / NCIMB 13688) (Methylobacterium extorquens).